The sequence spans 342 residues: tRNA(Ile)-lysidine synthase (342 aa).

Residue 31–36 (SGGQDS) coordinates ATP.

It belongs to the tRNA(Ile)-lysidine synthase family.

It localises to the cytoplasm. It catalyses the reaction cytidine(34) in tRNA(Ile2) + L-lysine + ATP = lysidine(34) in tRNA(Ile2) + AMP + diphosphate + H(+). In terms of biological role, ligates lysine onto the cytidine present at position 34 of the AUA codon-specific tRNA(Ile) that contains the anticodon CAU, in an ATP-dependent manner. Cytidine is converted to lysidine, thus changing the amino acid specificity of the tRNA from methionine to isoleucine. This Nostoc sp. (strain PCC 7120 / SAG 25.82 / UTEX 2576) protein is tRNA(Ile)-lysidine synthase.